The chain runs to 427 residues: MDCLPDDLLVQILYLLPTKEAVSTSVLSKRWRTLFTRSDNLDFHDPISGRPEDILKSFNDFVDSSLAFQGGKHIKKFSLHTKIKTFEYHVLDRWICNALEHGVSELHLHLMHESWPWLFSIPSKVFNSSTLVKLSLGSRLYCPSFPPDTSLPALKVLLLDSILFRDDQLSNVFLAACPALEDLTIHHTYHPCVISSKSIKKLSLSVNSGYYGAGYILTLDTPSVVDLYYSDSPRHNAPLFHLDSLAKVTLDLHFIENNNREVQNDADVKNLIREICNVKTLHLTCSTVEVISVYCKGGLPMFNNLVELVFSSKKEGWRVLLPLLLENSPNLETLVLSDLHRYTFGRRHRFVGIPIPPNNQIKVLRIMQYQGSATVLKHISHFLLNMDCLEVMKVNVAAALDDPKKMQLTEDLLKLPTASCKLKIQVL.

Positions 1 to 46 (MDCLPDDLLVQILYLLPTKEAVSTSVLSKRWRTLFTRSDNLDFHDP) constitute an F-box domain.

This chain is Putative F-box protein At3g44060, found in Arabidopsis thaliana (Mouse-ear cress).